A 179-amino-acid chain; its full sequence is Large ribosomal subunit protein uL5 (179 aa).

This sequence belongs to the universal ribosomal protein uL5 family. Part of the 50S ribosomal subunit; part of the 5S rRNA/L5/L18/L25 subcomplex. Contacts the 5S rRNA and the P site tRNA. Forms a bridge to the 30S subunit in the 70S ribosome.

Its function is as follows. This is one of the proteins that bind and probably mediate the attachment of the 5S RNA into the large ribosomal subunit, where it forms part of the central protuberance. In the 70S ribosome it contacts protein S13 of the 30S subunit (bridge B1b), connecting the 2 subunits; this bridge is implicated in subunit movement. Contacts the P site tRNA; the 5S rRNA and some of its associated proteins might help stabilize positioning of ribosome-bound tRNAs. In Solidesulfovibrio magneticus (strain ATCC 700980 / DSM 13731 / RS-1) (Desulfovibrio magneticus), this protein is Large ribosomal subunit protein uL5.